We begin with the raw amino-acid sequence, 190 residues long: Crossover junction endodeoxyribonuclease RuvC (190 aa).

Catalysis depends on residues D8, E67, and D139. Residues D8, E67, and D139 each coordinate Mg(2+).

Belongs to the RuvC family. Homodimer which binds Holliday junction (HJ) DNA. The HJ becomes 2-fold symmetrical on binding to RuvC with unstacked arms; it has a different conformation from HJ DNA in complex with RuvA. In the full resolvosome a probable DNA-RuvA(4)-RuvB(12)-RuvC(2) complex forms which resolves the HJ. Mg(2+) serves as cofactor.

The protein resides in the cytoplasm. It carries out the reaction Endonucleolytic cleavage at a junction such as a reciprocal single-stranded crossover between two homologous DNA duplexes (Holliday junction).. The RuvA-RuvB-RuvC complex processes Holliday junction (HJ) DNA during genetic recombination and DNA repair. Endonuclease that resolves HJ intermediates. Cleaves cruciform DNA by making single-stranded nicks across the HJ at symmetrical positions within the homologous arms, yielding a 5'-phosphate and a 3'-hydroxyl group; requires a central core of homology in the junction. The consensus cleavage sequence is 5'-(A/T)TT(C/G)-3'. Cleavage occurs on the 3'-side of the TT dinucleotide at the point of strand exchange. HJ branch migration catalyzed by RuvA-RuvB allows RuvC to scan DNA until it finds its consensus sequence, where it cleaves and resolves the cruciform DNA. The chain is Crossover junction endodeoxyribonuclease RuvC from Haemophilus influenzae (strain PittEE).